The following is a 307-amino-acid chain: uncharacterized protein (307 aa).

Helical transmembrane passes span 1–21, 52–72, 99–119, 133–153, 174–194, 208–228, 242–262, and 277–297; these read MLILISFTALILFFLAGMNML, IVFTGILQSSSAFMVIVIGFV, FIAIKMDIVIWVLLIGGLLFF, FLGLGIIFFCISGFSHLAGPL, LLIGMVLTAIIHSSSVCIGIL, AMSVVLGSNIGTCITAVMAAV, VVFNVLGVALVLPFLTAATGF, and FSLLFNVVTALLFLPLTNLFY.

It localises to the cell membrane. This is an uncharacterized protein from Bacillus subtilis (strain 168).